The following is a 398-amino-acid chain: 1-deoxy-D-xylulose 5-phosphate reductoisomerase (398 aa).

NADPH is bound by residues T13, G14, S15, I16, R40, and N127. K128 contacts 1-deoxy-D-xylulose 5-phosphate. E129 serves as a coordination point for NADPH. Residue D153 participates in Mn(2+) binding. 4 residues coordinate 1-deoxy-D-xylulose 5-phosphate: S154, E155, S188, and H211. E155 lines the Mn(2+) pocket. Residue G217 coordinates NADPH. 4 residues coordinate 1-deoxy-D-xylulose 5-phosphate: S224, N229, K230, and E233. Residue E233 coordinates Mn(2+).

It belongs to the DXR family. Mg(2+) is required as a cofactor. The cofactor is Mn(2+).

It carries out the reaction 2-C-methyl-D-erythritol 4-phosphate + NADP(+) = 1-deoxy-D-xylulose 5-phosphate + NADPH + H(+). The protein operates within isoprenoid biosynthesis; isopentenyl diphosphate biosynthesis via DXP pathway; isopentenyl diphosphate from 1-deoxy-D-xylulose 5-phosphate: step 1/6. Functionally, catalyzes the NADPH-dependent rearrangement and reduction of 1-deoxy-D-xylulose-5-phosphate (DXP) to 2-C-methyl-D-erythritol 4-phosphate (MEP). The sequence is that of 1-deoxy-D-xylulose 5-phosphate reductoisomerase from Cellvibrio japonicus (strain Ueda107) (Pseudomonas fluorescens subsp. cellulosa).